Reading from the N-terminus, the 428-residue chain is L-rhamnonate dehydratase (428 aa).

Residues histidine 56 and arginine 82 each coordinate substrate. Positions 249, 275, and 303 each coordinate Mg(2+). The active-site Proton acceptor is the histidine 352. Glutamate 372 provides a ligand contact to substrate.

This sequence belongs to the mandelate racemase/muconate lactonizing enzyme family. RhamD subfamily. In terms of assembly, homooctamer; tetramer of dimers. It depends on Mg(2+) as a cofactor.

The enzyme catalyses L-rhamnonate = 2-dehydro-3-deoxy-L-rhamnonate + H2O. Catalyzes the dehydration of L-rhamnonate to 2-keto-3-deoxy-L-rhamnonate (KDR). The chain is L-rhamnonate dehydratase from Shigella sonnei (strain Ss046).